Here is a 382-residue protein sequence, read N- to C-terminus: Opsin-VA (382 aa).

Topologically, residues 1-35 are extracellular; it reads MELFPVAVNGVSHAEDPFSGPLTFIAPWNYKVLAT. The helical transmembrane segment at 36–56 threads the bilayer; that stretch reads LMFVVTAASLSENFAVMLVTF. Residues 57 to 67 are Cytoplasmic-facing; that stretch reads RFTQLRKPLNY. The chain crosses the membrane as a helical span at residues 68–88; it reads IIVNLSLADFLVSLTGGTISF. Over 89-103 the chain is Extracellular; that stretch reads LTNYHGYFFLGKWAC. A disulfide bond links Cys103 and Cys180. The helical transmembrane segment at 104-124 threads the bilayer; sequence VLEGFAVTYFGIVALWSLAVL. At 125–147 the chain is on the cytoplasmic side; that stretch reads AFERFFVICRPLGNIRLRGKHAA. The chain crosses the membrane as a helical span at residues 148–168; it reads LGLLFVWTFSFIWTIPPVLGW. The Extracellular portion of the chain corresponds to 169-193; that stretch reads SSYTVSKIGTTCEPNWYSGNFHDHT. Residues 194 to 214 form a helical membrane-spanning segment; the sequence is FIIAFFITCFILPLGVIVVCY. Residues 215–244 are Cytoplasmic-facing; sequence CKLIKKLRKVSNTHGRLGNARKPERQVTRM. A helical membrane pass occupies residues 245–265; sequence VVVMIVAFMVAWTPYAAFSIV. The Extracellular segment spans residues 266–279; sequence VTAHPSIHLDPRLA. Residues 280–300 traverse the membrane as a helical segment; sequence AAPAFFSKTAAVYNPVIYVFM. Lys287 carries the N6-(retinylidene)lysine modification. Topologically, residues 301–382 are cytoplasmic; sequence NKQFRKCLVQ…PIPENKVCPM (82 aa). Residues 330–346 show a composition bias toward polar residues; that stretch reads RQGMTNESHTGEMSTIA. The interval 330–371 is disordered; the sequence is RQGMTNESHTGEMSTIASRIPKDGSIPEKTQEHPGERRSLAH. The segment covering 349–368 has biased composition (basic and acidic residues); that stretch reads IPKDGSIPEKTQEHPGERRS.

It belongs to the G-protein coupled receptor 1 family. Opsin subfamily. As to expression, expressed in a subset of retinal horizontal cells as well as in retinal ganglion cells.

It localises to the membrane. The polypeptide is Opsin-VA (Rutilus rutilus (Roach)).